Here is a 212-residue protein sequence, read N- to C-terminus: Outer-membrane lipoprotein LolB (212 aa).

Residues 1–16 (MACRSWVLGILLVLVG) form the signal peptide. A lipid anchor (N-palmitoyl cysteine) is attached at Cys17. Cys17 carries S-diacylglycerol cysteine lipidation.

It belongs to the LolB family. In terms of assembly, monomer.

It is found in the cell outer membrane. Plays a critical role in the incorporation of lipoproteins in the outer membrane after they are released by the LolA protein. The sequence is that of Outer-membrane lipoprotein LolB from Nitrosomonas europaea (strain ATCC 19718 / CIP 103999 / KCTC 2705 / NBRC 14298).